Reading from the N-terminus, the 238-residue chain is MATLGVNIDHIANVRQARKTVEPDPVQFAFLAELGGADSITVHLREDRRHIQDRDVFLLKETIKTKLNLEMAATKEMLEIAKKILPDYVTLVPEKREEVTTEGGLDLKSNVQYLKKAVGSLKDSNIEVSAFIDPLSEQINYSKEIGFDFIELHTGKYAELSGSNQHKELQRIIESTHIANDLGLVVNAGHGLNYNNVRKIASINNMNELNIGHSIVARALAIGLEKSVREMKSLITLN.

3-amino-2-oxopropyl phosphate is bound at residue Asn7. A 1-deoxy-D-xylulose 5-phosphate-binding site is contributed by 9-10 (DH). Arg18 is a 3-amino-2-oxopropyl phosphate binding site. His43 acts as the Proton acceptor in catalysis. The 1-deoxy-D-xylulose 5-phosphate site is built by Arg45 and His50. Catalysis depends on Glu70, which acts as the Proton acceptor. Thr100 contacts 1-deoxy-D-xylulose 5-phosphate. His190 (proton donor) is an active-site residue. Residues Gly191 and 212-213 (GH) each bind 3-amino-2-oxopropyl phosphate.

Belongs to the PNP synthase family. In terms of assembly, homooctamer; tetramer of dimers.

Its subcellular location is the cytoplasm. It catalyses the reaction 3-amino-2-oxopropyl phosphate + 1-deoxy-D-xylulose 5-phosphate = pyridoxine 5'-phosphate + phosphate + 2 H2O + H(+). It participates in cofactor biosynthesis; pyridoxine 5'-phosphate biosynthesis; pyridoxine 5'-phosphate from D-erythrose 4-phosphate: step 5/5. Its function is as follows. Catalyzes the complicated ring closure reaction between the two acyclic compounds 1-deoxy-D-xylulose-5-phosphate (DXP) and 3-amino-2-oxopropyl phosphate (1-amino-acetone-3-phosphate or AAP) to form pyridoxine 5'-phosphate (PNP) and inorganic phosphate. The chain is Pyridoxine 5'-phosphate synthase from Prochlorococcus marinus (strain AS9601).